Here is a 468-residue protein sequence, read N- to C-terminus: ATP synthase subunit beta (468 aa).

155–162 (GGAGVGKT) lines the ATP pocket.

Belongs to the ATPase alpha/beta chains family. As to quaternary structure, F-type ATPases have 2 components, CF(1) - the catalytic core - and CF(0) - the membrane proton channel. CF(1) has five subunits: alpha(3), beta(3), gamma(1), delta(1), epsilon(1). CF(0) has three main subunits: a(1), b(2) and c(9-12). The alpha and beta chains form an alternating ring which encloses part of the gamma chain. CF(1) is attached to CF(0) by a central stalk formed by the gamma and epsilon chains, while a peripheral stalk is formed by the delta and b chains.

It is found in the cell membrane. The catalysed reaction is ATP + H2O + 4 H(+)(in) = ADP + phosphate + 5 H(+)(out). In terms of biological role, produces ATP from ADP in the presence of a proton gradient across the membrane. The catalytic sites are hosted primarily by the beta subunits. This Streptococcus pyogenes serotype M1 protein is ATP synthase subunit beta.